Here is a 434-residue protein sequence, read N- to C-terminus: UDP-N-acetylglucosamine 1-carboxyvinyltransferase (434 aa).

A phosphoenolpyruvate-binding site is contributed by 34-35; that stretch reads KN. Arginine 104 is a binding site for UDP-N-acetyl-alpha-D-glucosamine. Residue cysteine 128 is the Proton donor of the active site. At cysteine 128 the chain carries 2-(S-cysteinyl)pyruvic acid O-phosphothioketal. Residues aspartate 319 and isoleucine 341 each contribute to the UDP-N-acetyl-alpha-D-glucosamine site.

It belongs to the EPSP synthase family. MurA subfamily.

The protein localises to the cytoplasm. The catalysed reaction is phosphoenolpyruvate + UDP-N-acetyl-alpha-D-glucosamine = UDP-N-acetyl-3-O-(1-carboxyvinyl)-alpha-D-glucosamine + phosphate. It participates in cell wall biogenesis; peptidoglycan biosynthesis. Functionally, cell wall formation. Adds enolpyruvyl to UDP-N-acetylglucosamine. This is UDP-N-acetylglucosamine 1-carboxyvinyltransferase from Prochlorococcus marinus (strain MIT 9313).